A 611-amino-acid polypeptide reads, in one-letter code: Protein decapping 5 (611 aa).

In terms of domain architecture, Sm spans 9–92; it reads KSSSAADSYV…IKDLQVKASP (84 aa). Disordered regions lie at residues 111 to 153, 183 to 238, 264 to 301, 318 to 362, 396 to 455, and 519 to 611; these read HYPS…AMPL, GLPQ…PSSL, SSSL…PTLP, EAST…DKPK, QVSS…AGRS, and FFDS…NRTT. Composition is skewed to polar residues over residues 117–140 and 203–214; these read PTSG…NGQP and NSLQQPLQYPNF. A compositionally biased stretch (low complexity) spans 264-281; sequence SSSLQSTLQSAPSPSLAS. Polar residues-rich tracts occupy residues 318–330, 396–413, and 424–437; these read EAST…NKPS, QVSS…TSEA, and ARPT…SFPN. Residues 441–453 are compositionally biased toward basic residues; sequence YRGRGRGRGRGAG. The region spanning 453-489 is the DFDF domain; that stretch reads GRSHQVMKFTEDFDFTAMNEKFNKDEVWGHLGKSTTL. An FFD box motif is present at residues 512-527; that stretch reads PVYNKDDFFDSLSSNT. Over residues 528-547 the composition is skewed to basic and acidic residues; the sequence is IDRESQNSRPRFSEQRKLDT. Positions 534–554 match the TFG box motif; the sequence is NSRPRFSEQRKLDTETFGEFS. The span at 559–604 shows a compositional bias: gly residues; that stretch reads GRGGRGGYGRNNGYSRGGYGGRGYGGYGGRGGGGGGYGYGGRGQGR.

The protein belongs to the LSM14 family. Homodimer. Component of the decapping complex. Interacts with DCP1 and DCP2.

It localises to the cytoplasm. It is found in the P-body. In terms of biological role, as a component of the decapping complex, involved in the degradation of mRNAs. Promotes P-body formation. Translational repressor. The polypeptide is Protein decapping 5 (DCP5) (Arabidopsis thaliana (Mouse-ear cress)).